The following is a 1470-amino-acid chain: MGAATSALNRRQLDEFEHIRLRPNGKKKYQIKHLIWAGKKMDRFGLHEKLLETEEGCKKIIEVLSPLEPTGSEGMKSLYNLVCVLLCVHQEKKVKDTEEALAIVRQCCHLVDKEKTAVTPPGGQQKNNTGGTATPGGSQNFPAQQQGNAWVHVPLSPRTLNAWVKAVEEKKFGAEIVPMFQALSEGCTPYDINQMLNVLGDHQGALQIVKEIINEEAAQWDVTHPPPAGPLPAGQLRDPGGSDIAGTTSTVQEQLEWIYTANPRVDVGAIYRRWIILGLQKCVKMYNPVSVLDIRQGPKEPFKDYVDRFYKAIRAEQASGEVKQWMTESLLIQNANPDCKVILKGLGMHPTLEEMLTACQGVGGPSYKAKVMAEMMQNLQSQNMVQQGGGRGRPRPPPKCYNCGKFGHMQRQCPEPRKIKCLKCGKPGHLAKDCRGQVNFFRVWPVDGDKTKKFSRSHSWGGTKCAPSTEQLYTLRPSKEAPAAVCRERETNEKSEQKPPSEQSRLERGIFFELPLWRRPIRTCIIGGTAVKALLDTGADDTIIKDTDLQLRGSWRPKIVGGIGGGLNVKEYDNVEVQLEDKILRGTVLIGATPINIIGRNFLAQAGAKLVMGQLSQTIPITPVRLKEGARGPRLKQWPLSKEKIIALQEICKTLEEEGKLSRVGGDNAYNTPVFCIRKKDKSQWRMLVDFRELNKATQDFFEVQLGIPHPAGLKKMKQITIIDVGDAYYSIPLDPEFRKYTAFTIPTVNNEGPGIRYQFNCLPQGWKGSPTIFQNTASKILEEIKKELKQLTIVQYMDDLWVGSQEEGPKHDQLVQTLRNRLQEWGLETPEKKVQREPPFEWMGYKLWPHKWKLQSIELEKKEQWTVNDLQKLVGKLNWAAQLYPGLRTKNICKLLRGKKNLLDVVEWTPEAEAEYEENKEILKTEQEGTYYAPEKPLRAAVQKLGDGQWSYQFKQEGKILKVGKFAKQKATHTNELRVLAGVVQKIGKEALVIWGQLPTFELPVERDTWEQWWADYWQVSWIPEWDFVSVPPLVTLWYTLTKEPIPGEDVYYVDGACNRQSKEGKAGYITQQGKQRVQQLENTTNQQAELTAIKMALEDSGPKVNIVTDSQYAMGILTAQPTQSDSPLVEQIIAQMVQKEAIYLQWVPAHKGIGGNEEIDKLVSKGVRRILFIGRIEEAQEEHDRYHSNWRNLADTFGLPQIVAKEIVAMCPKCQVKGEPIHGQVDASPGVWQMDCTHIEGKIVIVAVHVASGFIEAEVIPRETGKETAKFLLKIIGRWPITHLHTDNGPNFTSQEVAAMCWWGKVEHTTGVPYNPQSQGSIESMNKQLKEIIGKIRDDCQYTETAVLMACHIHNFKRKGGIGGLTAAERLINMITTQLEINTLQTKIQKILNFRVYYREGRDPVWKGPARLIWKGEGAVVLKEGEELKVVPRRKAKIIKDYEPRKTLGDETHLEGAGGSDHQMAGDS.

Gly2 is lipidated: N-myristoyl glycine; by host. Residues Phe16 to Arg22 carry the Nuclear export signal motif. The short motif at Lys26–Lys32 is the Nuclear localization signal element. A disordered region spans residues Ala117–Gln144. Residues Gly122–Gln144 show a composition bias toward polar residues. CCHC-type zinc fingers lie at residues Pro398–Glu415 and Ile419–Gly436. The tract at residues Lys479 to Ser504 is disordered. The span at Cys486 to Ser504 shows a compositional bias: basic and acidic residues. One can recognise a Peptidase A2 domain in the interval Val531–Phe602. The active-site For protease activity; shared with dimeric partner is Asp536. Residues Glu658–Leu848 form the Reverse transcriptase domain. Mg(2+) contacts are provided by Asp724, Asp799, and Asp800. Residues Phe841–Trp849 are RT 'primer grip'. Residues Trp1011–Trp1027 carry the Tryptophan repeat motif motif. One can recognise an RNase H type-1 domain in the interval Ile1047–Arg1170. Mg(2+)-binding residues include Asp1056, Glu1091, Asp1111, and Asp1162. An Integrase-type zinc finger spans residues Gly1176 to Gln1217. Residues His1185, His1189, Cys1213, and Cys1216 each contribute to the Zn(2+) site. Residues Val1227–Ile1377 enclose the Integrase catalytic domain. The Mg(2+) site is built by Asp1237 and Asp1289. The integrase-type DNA-binding region spans Phe1396–Asp1443. Residues Gly1451–Ser1470 form a disordered region.

Homotrimer. Interacts with gp41 (via C-terminus). As to quaternary structure, homodimer. The active site consists of two apposed aspartic acid residues. In terms of assembly, heterodimer of p66 RT and p51 RT (RT p66/p51). Heterodimerization of RT is essential for DNA polymerase activity. Despite the sequence identities, p66 RT and p51 RT have distinct folding. Homotetramer; may further associate as a homohexadecamer. Mg(2+) is required as a cofactor. Post-translationally, specific enzymatic cleavages by the viral protease yield mature proteins. The protease is released by autocatalytic cleavage. The polyprotein is cleaved during and after budding, this process is termed maturation. Proteolytic cleavage of p66 RT removes the RNase H domain to yield the p51 RT subunit. In terms of processing, capsid protein p24 is phosphorylated.

The protein resides in the virion. It localises to the host nucleus. It is found in the host cytoplasm. The protein localises to the host cell membrane. The enzyme catalyses Specific for a P1 residue that is hydrophobic, and P1' variable, but often Pro.. It catalyses the reaction Endohydrolysis of RNA in RNA/DNA hybrids. Three different cleavage modes: 1. sequence-specific internal cleavage of RNA. Human immunodeficiency virus type 1 and Moloney murine leukemia virus enzymes prefer to cleave the RNA strand one nucleotide away from the RNA-DNA junction. 2. RNA 5'-end directed cleavage 13-19 nucleotides from the RNA end. 3. DNA 3'-end directed cleavage 15-20 nucleotides away from the primer terminus.. The catalysed reaction is 3'-end directed exonucleolytic cleavage of viral RNA-DNA hybrid.. It carries out the reaction DNA(n) + a 2'-deoxyribonucleoside 5'-triphosphate = DNA(n+1) + diphosphate. The viral protease is inhibited by many synthetic protease inhibitors (PIs), such as amprenavir, atazanavir, indinavir, loprinavir, nelfinavir, ritonavir and saquinavir. RT can be inhibited either by nucleoside RT inhibitors (NRTIs) or by non nucleoside RT inhibitors (NNRTIs). NRTIs act as chain terminators, whereas NNRTIs inhibit DNA polymerization by binding a small hydrophobic pocket near the RT active site and inducing an allosteric change in this region. Classical NRTIs are abacavir, adefovir (PMEA), didanosine (ddI), lamivudine (3TC), stavudine (d4T), tenofovir (PMPA), zalcitabine (ddC), and zidovudine (AZT). Classical NNRTIs are atevirdine (BHAP U-87201E), delavirdine, efavirenz (DMP-266), emivirine (I-EBU), and nevirapine (BI-RG-587). The tritherapies used as a basic effective treatment of AIDS associate two NRTIs and one NNRTI. Use of protease inhibitors in tritherapy regimens permit more ambitious therapeutic strategies. In terms of biological role, gag-Pol polyprotein and Gag polyprotein may regulate their own translation, by the binding genomic RNA in the 5'-UTR. At low concentration, Gag-Pol and Gag would promote translation, whereas at high concentration, the polyproteins encapsidate genomic RNA and then shut off translation. Functionally, matrix protein p17 has two main functions: in infected cell, it targets Gag and Gag-pol polyproteins to the plasma membrane via a multipartite membrane-binding signal, that includes its myristointegration complex. The myristoylation signal and the NLS exert conflicting influences its subcellular localization. The key regulation of these motifs might be phosphorylation of a portion of MA molecules on the C-terminal tyrosine at the time of virus maturation, by virion-associated cellular tyrosine kinase. Implicated in the release from host cell mediated by Vpu. Capsid protein p24 forms the conical core that encapsulates the genomic RNA-nucleocapsid complex in the virion. The core is constituted by capsid protein hexamer subunits. The core is disassembled soon after virion entry. Interaction with host PPIA/CYPA protects the virus from restriction by host TRIM5-alpha and from an unknown antiviral activity in host cells. This capsid restriction by TRIM5 is one of the factors which restricts SIV to the simian species. Its function is as follows. Nucleocapsid protein p7 encapsulates and protects viral dimeric unspliced (genomic) RNA. Binds these RNAs through its zinc fingers. Facilitates rearangement of nucleic acid secondary structure during retrotranscription of genomic RNA. This capability is referred to as nucleic acid chaperone activity. In terms of biological role, the aspartyl protease mediates proteolytic cleavages of Gag and Gag-Pol polyproteins during or shortly after the release of the virion from the plasma membrane. Cleavages take place as an ordered, step-wise cascade to yield mature proteins. This process is called maturation. Displays maximal activity during the budding process just prior to particle release from the cell. Also cleaves Nef and Vif, probably concomitantly with viral structural proteins on maturation of virus particles. Hydrolyzes host EIF4GI and PABP1 in order to shut off the capped cellular mRNA translation. The resulting inhibition of cellular protein synthesis serves to ensure maximal viral gene expression and to evade host immune response. Functionally, reverse transcriptase/ribonuclease H (RT) is a multifunctional enzyme that converts the viral dimeric RNA genome into dsDNA in the cytoplasm, shortly after virus entry into the cell. This enzyme displays a DNA polymerase activity that can copy either DNA or RNA templates, and a ribonuclease H (RNase H) activity that cleaves the RNA strand of RNA-DNA heteroduplexes in a partially processive 3' to 5' endonucleasic mode. Conversion of viral genomic RNA into dsDNA requires many steps. A tRNA binds to the primer-binding site (PBS) situated at the 5'-end of the viral RNA. RT uses the 3' end of the tRNA primer to perform a short round of RNA-dependent minus-strand DNA synthesis. The reading proceeds through the U5 region and ends after the repeated (R) region which is present at both ends of viral RNA. The portion of the RNA-DNA heteroduplex is digested by the RNase H, resulting in a ssDNA product attached to the tRNA primer. This ssDNA/tRNA hybridizes with the identical R region situated at the 3' end of viral RNA. This template exchange, known as minus-strand DNA strong stop transfer, can be either intra- or intermolecular. RT uses the 3' end of this newly synthesized short ssDNA to perform the RNA-dependent minus-strand DNA synthesis of the whole template. RNase H digests the RNA template except for two polypurine tracts (PPTs) situated at the 5'-end and near the center of the genome. It is not clear if both polymerase and RNase H activities are simultaneous. RNase H can probably proceed both in a polymerase-dependent (RNA cut into small fragments by the same RT performing DNA synthesis) and a polymerase-independent mode (cleavage of remaining RNA fragments by free RTs). Secondly, RT performs DNA-directed plus-strand DNA synthesis using the PPTs that have not been removed by RNase H as primers. PPTs and tRNA primers are then removed by RNase H. The 3' and 5' ssDNA PBS regions hybridize to form a circular dsDNA intermediate. Strand displacement synthesis by RT to the PBS and PPT ends produces a blunt ended, linear dsDNA copy of the viral genome that includes long terminal repeats (LTRs) at both ends. Integrase catalyzes viral DNA integration into the host chromosome, by performing a series of DNA cutting and joining reactions. This enzyme activity takes place after virion entry into a cell and reverse transcription of the RNA genome in dsDNA. The first step in the integration process is 3' processing. This step requires a complex comprising the viral genome, matrix protein, Vpr and integrase. This complex is called the pre-integration complex (PIC). The integrase protein removes 2 nucleotides from each 3' end of the viral DNA, leaving recessed CA OH's at the 3' ends. In the second step, the PIC enters cell nucleus. This process is mediated through integrase and Vpr proteins, and allows the virus to infect a non dividing cell. This ability to enter the nucleus is specific of lentiviruses, other retroviruses cannot and rely on cell division to access cell chromosomes. In the third step, termed strand transfer, the integrase protein joins the previously processed 3' ends to the 5' ends of strands of target cellular DNA at the site of integration. The 5'-ends are produced by integrase-catalyzed staggered cuts, 5 bp apart. A Y-shaped, gapped, recombination intermediate results, with the 5'-ends of the viral DNA strands and the 3' ends of target DNA strands remaining unjoined, flanking a gap of 5 bp. The last step is viral DNA integration into host chromosome. This involves host DNA repair synthesis in which the 5 bp gaps between the unjoined strands are filled in and then ligated. Since this process occurs at both cuts flanking the SIV genome, a 5 bp duplication of host DNA is produced at the ends of SIV integration. Alternatively, Integrase may catalyze the excision of viral DNA just after strand transfer, this is termed disintegration. This chain is Gag-Pol polyprotein (gag-pol), found in Cercopithecidae (Old World monkeys).